We begin with the raw amino-acid sequence, 184 residues long: Peptidyl-tRNA hydrolase (184 aa).

Y13 provides a ligand contact to tRNA. H18 (proton acceptor) is an active-site residue. Residues F59, N61, and N105 each contribute to the tRNA site.

It belongs to the PTH family. Monomer.

It localises to the cytoplasm. It carries out the reaction an N-acyl-L-alpha-aminoacyl-tRNA + H2O = an N-acyl-L-amino acid + a tRNA + H(+). Hydrolyzes ribosome-free peptidyl-tRNAs (with 1 or more amino acids incorporated), which drop off the ribosome during protein synthesis, or as a result of ribosome stalling. In terms of biological role, catalyzes the release of premature peptidyl moieties from peptidyl-tRNA molecules trapped in stalled 50S ribosomal subunits, and thus maintains levels of free tRNAs and 50S ribosomes. The chain is Peptidyl-tRNA hydrolase from Sulfurimonas denitrificans (strain ATCC 33889 / DSM 1251) (Thiomicrospira denitrificans (strain ATCC 33889 / DSM 1251)).